A 481-amino-acid polypeptide reads, in one-letter code: Cysteine--tRNA ligase (481 aa).

Cysteine 29 is a Zn(2+) binding site. The short motif at 31–41 is the 'HIGH' region element; the sequence is VTVYDYCHIGH. Zn(2+) contacts are provided by cysteine 209, histidine 234, and glutamate 238. A 'KMSKS' region motif is present at residues 266-270; that stretch reads KMSKS. Lysine 269 contacts ATP.

Belongs to the class-I aminoacyl-tRNA synthetase family. Monomer. Zn(2+) serves as cofactor.

The protein localises to the cytoplasm. The enzyme catalyses tRNA(Cys) + L-cysteine + ATP = L-cysteinyl-tRNA(Cys) + AMP + diphosphate. This is Cysteine--tRNA ligase from Syntrophotalea carbinolica (strain DSM 2380 / NBRC 103641 / GraBd1) (Pelobacter carbinolicus).